A 776-amino-acid polypeptide reads, in one-letter code: Kinesin-like protein KIN-8A (776 aa).

Disordered stretches follow at residues 1 to 31 (MPVS…RGGA) and 80 to 135 (VGEV…KSSH). Positions 7-26 (ASAAGGQPWSSAAPAPASAP) are enriched in low complexity. The span at 123-132 (PPPPPAPPPK) shows a compositional bias: pro residues. Residues 205 to 534 (RIMVFVRLRP…LHWADRAKEI (330 aa)) enclose the Kinesin motor domain. 297 to 304 (GATGAGKT) serves as a coordination point for ATP. Residues 554-592 (TDQAKLVLELQKENSELRQQLARQQQKLLTVQAQTLASN) adopt a coiled-coil conformation. Residues 590–611 (ASNASPQQSPAPSAQISTPCST) are disordered. Residues 593 to 604 (ASPQQSPAPSAQ) are compositionally biased toward low complexity. Residues 634 to 671 (AAENAQVRDLQRKVKAMEAEIEKMKKEHLLQLKQKDEF) adopt a coiled-coil conformation.

Belongs to the TRAFAC class myosin-kinesin ATPase superfamily. Kinesin family. KIN-8 subfamily.

The chain is Kinesin-like protein KIN-8A from Oryza sativa subsp. japonica (Rice).